A 53-amino-acid chain; its full sequence is U13-myrmicitoxin-Tb1a (53 aa).

An N-terminal signal peptide occupies residues 1–23 (MKLIYIFSLVAVIAVTMIPGIMG). A propeptide spanning residues 24–29 (EAEAEG) is cleaved from the precursor. Lysine 52 is subject to Lysine amide.

As to expression, expressed by the venom gland.

It localises to the secreted. In vivo, this neurotoxin paralyzes about 70% of blowflies (L.caesar) one hour after intrathoracic injection, when tested at high doses (45 nmol/g). This Tetramorium bicarinatum (Tramp ant) protein is U13-myrmicitoxin-Tb1a.